Reading from the N-terminus, the 109-residue chain is Cell division protein ZapA (109 aa).

A coiled-coil region spans residues 21 to 99; the sequence is PEQQDALNQA…IEQALLEQGR (79 aa).

Belongs to the ZapA family. Type 1 subfamily. Homodimer. Interacts with FtsZ.

Its subcellular location is the cytoplasm. Activator of cell division through the inhibition of FtsZ GTPase activity, therefore promoting FtsZ assembly into bundles of protofilaments necessary for the formation of the division Z ring. It is recruited early at mid-cell but it is not essential for cell division. This is Cell division protein ZapA from Pectobacterium carotovorum subsp. carotovorum (strain PC1).